A 115-amino-acid chain; its full sequence is Holo-[acyl-carrier-protein] synthase (115 aa).

Mg(2+) contacts are provided by Asp-8 and Glu-50.

The protein belongs to the P-Pant transferase superfamily. AcpS family. Mg(2+) is required as a cofactor.

Its subcellular location is the cytoplasm. It catalyses the reaction apo-[ACP] + CoA = holo-[ACP] + adenosine 3',5'-bisphosphate + H(+). In terms of biological role, transfers the 4'-phosphopantetheine moiety from coenzyme A to a Ser of acyl-carrier-protein. This chain is Holo-[acyl-carrier-protein] synthase, found in Arthrobacter sp. (strain FB24).